A 253-amino-acid polypeptide reads, in one-letter code: Imidazole glycerol phosphate synthase subunit HisF (253 aa).

Residues aspartate 11 and aspartate 130 contribute to the active site.

It belongs to the HisA/HisF family. In terms of assembly, heterodimer of HisH and HisF.

Its subcellular location is the cytoplasm. The enzyme catalyses 5-[(5-phospho-1-deoxy-D-ribulos-1-ylimino)methylamino]-1-(5-phospho-beta-D-ribosyl)imidazole-4-carboxamide + L-glutamine = D-erythro-1-(imidazol-4-yl)glycerol 3-phosphate + 5-amino-1-(5-phospho-beta-D-ribosyl)imidazole-4-carboxamide + L-glutamate + H(+). Its pathway is amino-acid biosynthesis; L-histidine biosynthesis; L-histidine from 5-phospho-alpha-D-ribose 1-diphosphate: step 5/9. In terms of biological role, IGPS catalyzes the conversion of PRFAR and glutamine to IGP, AICAR and glutamate. The HisF subunit catalyzes the cyclization activity that produces IGP and AICAR from PRFAR using the ammonia provided by the HisH subunit. This is Imidazole glycerol phosphate synthase subunit HisF from Ruminiclostridium cellulolyticum (strain ATCC 35319 / DSM 5812 / JCM 6584 / H10) (Clostridium cellulolyticum).